We begin with the raw amino-acid sequence, 146 residues long: UPF0260 protein Sden_1632 (146 aa).

It belongs to the UPF0260 family.

This Shewanella denitrificans (strain OS217 / ATCC BAA-1090 / DSM 15013) protein is UPF0260 protein Sden_1632.